A 353-amino-acid polypeptide reads, in one-letter code: Peroxisome assembly protein 12-B (353 aa).

The Peroxisomal matrix segment spans residues 1–19 (MAERGAHITTTSPLDDRPS). Residues 20 to 47 (IFEVVAQESLMAAARPALHHIVKVLAES) form a helical membrane-spanning segment. The Cytoplasmic portion of the chain corresponds to 48 to 51 (NPAR). Residues 52–76 (YGTLWRWFDELYTLLECLLQQHYLS) form a helical membrane-spanning segment. At 77–104 (WASASFSENFYGLKRVTLGKQVGQRNLA) the chain is on the peroxisomal matrix side. Residues 105 to 134 (RKEYWKSLLLLVLIPYLRIKLEKLVNSLRE) form a helical membrane-spanning segment. Topologically, residues 135–139 (EEDYS) are cytoplasmic. The chain crosses the membrane as a helical span at residues 140-178 (IQNPTSFHKRCYKAILASYPFLKLGWEAWFLFYQLRYIL). Topologically, residues 179–243 (WNGKHHSPLL…LGAVTLSVSS (65 aa)) are peroxisomal matrix. A helical membrane pass occupies residues 244 to 271 (SLSLGVFFLQFLDWWYSAENRETLKSLG). Over 272–353 (NLPVPPPPIH…HLIKLYTPDG (82 aa)) the chain is Cytoplasmic. Zn(2+)-binding residues include cysteine 298, cysteine 301, cysteine 319, and cysteine 322. An RING-type; degenerate zinc finger spans residues 298-337 (CPLCRKVRVNDTALGTSGYVFCYRCAYYYVKTHQRCPVSG).

It belongs to the pex2/pex10/pex12 family. Component of the PEX2-PEX10-PEX12 retrotranslocation channel.

Its subcellular location is the peroxisome membrane. It functions in the pathway protein modification; protein ubiquitination. Its function is as follows. Component of a retrotranslocation channel required for peroxisome organization by mediating export of the PEX5 receptor from peroxisomes to the cytosol, thereby promoting PEX5 recycling. The retrotranslocation channel is composed of PEX2, PEX10 and PEX12; each subunit contributing transmembrane segments that coassemble into an open channel that specifically allows the passage of PEX5 through the peroxisomal membrane. PEX12 also regulates PEX5 recycling by activating the E3 ubiquitin-protein ligase activity of PEX10. When PEX5 recycling is compromised, PEX12 stimulates PEX10-mediated polyubiquitination of PEX5, leading to its subsequent degradation. In Xenopus laevis (African clawed frog), this protein is Peroxisome assembly protein 12-B.